A 236-amino-acid polypeptide reads, in one-letter code: Potassium/proton antiporter CemA (236 aa).

The next 4 membrane-spanning stretches (helical) occupy residues 18 to 38, 114 to 134, 161 to 181, and 196 to 216; these read YIISLSFFFILIYQLLNFLVL, IAHVFTDLLIAFLIFCLLINA, LILFTDIFVGFHSSHGWKILI, and FIFLFVATFPVILDTLFKYWI.

Belongs to the CemA family.

Its subcellular location is the plastid. The protein resides in the chloroplast inner membrane. The catalysed reaction is K(+)(in) + H(+)(out) = K(+)(out) + H(+)(in). In terms of biological role, contributes to K(+)/H(+) antiport activity by supporting proton efflux to control proton extrusion and homeostasis in chloroplasts in a light-dependent manner to modulate photosynthesis. Prevents excessive induction of non-photochemical quenching (NPQ) under continuous-light conditions. Indirectly promotes efficient inorganic carbon uptake into chloroplasts. In Mesostigma viride (Green alga), this protein is Potassium/proton antiporter CemA.